Here is a 460-residue protein sequence, read N- to C-terminus: Xyloglucan 6-xylosyltransferase 1 (460 aa).

Over 1–20 (MIEKCIGAHRFRRLQRFMRQ) the chain is Cytoplasmic. Residues 21–40 (GKVTILCLVLTVIVLRGTIG) traverse the membrane as a helical; Signal-anchor for type II membrane protein segment. The Lumenal segment spans residues 41–460 (AGKFGTPEKD…KAAKLSTTTT (420 aa)). UDP-alpha-D-xylose-binding positions include Gly156 and 227–229 (DSD). Residues Asp227 and Asp229 each contribute to the Mn(2+) site. His346 contributes to the substrate binding site. Positions 377, 380, and 382 each coordinate UDP-alpha-D-xylose. Mn(2+) is bound at residue His377. Residues Lys382 and 389-390 (DY) contribute to the substrate site. N-linked (GlcNAc...) asparagine glycosylation is present at Asn431.

This sequence belongs to the glycosyltransferase 34 family. As to quaternary structure, forms homodimer. Interacts with XXT2. Requires Mn(2+) as cofactor.

It is found in the golgi apparatus membrane. It carries out the reaction Transfers an alpha-D-xylosyl residue from UDP-D-xylose to a glucose residue in xyloglucan, forming an alpha-(1-&gt;6)-D-xylosyl-D-glucose linkage.. It functions in the pathway protein modification; protein glycosylation. In terms of biological role, xylosyltransferase specific to UDP-D-xylose that accepts both cellopentaose and cellohexaose as substrates, with a better use of cellohexaose, to produce xyloglucan. Adds preferentially the first xylosyl residue to the fourth glucosyl residue from the reducing end of both acceptors. Transfer one xylose mainly to the second glucose residue from the non-reducing end. The acceptor should have a minimum of four glucose residues. The protein is Xyloglucan 6-xylosyltransferase 1 of Arabidopsis thaliana (Mouse-ear cress).